A 206-amino-acid polypeptide reads, in one-letter code: ATP phosphoribosyltransferase (206 aa).

It belongs to the ATP phosphoribosyltransferase family. Short subfamily. In terms of assembly, heteromultimer composed of HisG and HisZ subunits.

Its subcellular location is the cytoplasm. The enzyme catalyses 1-(5-phospho-beta-D-ribosyl)-ATP + diphosphate = 5-phospho-alpha-D-ribose 1-diphosphate + ATP. It functions in the pathway amino-acid biosynthesis; L-histidine biosynthesis; L-histidine from 5-phospho-alpha-D-ribose 1-diphosphate: step 1/9. Catalyzes the condensation of ATP and 5-phosphoribose 1-diphosphate to form N'-(5'-phosphoribosyl)-ATP (PR-ATP). Has a crucial role in the pathway because the rate of histidine biosynthesis seems to be controlled primarily by regulation of HisG enzymatic activity. The polypeptide is ATP phosphoribosyltransferase (Geobacillus sp. (strain WCH70)).